Consider the following 195-residue polypeptide: Probable GTP-binding protein EngB (195 aa).

One can recognise an EngB-type G domain in the interval 24–195; that stretch reads DIPEIALAGR…AAWDAILSKI (172 aa). Residues 32 to 39, 59 to 63, 77 to 80, 144 to 147, and 176 to 178 contribute to the GTP site; these read GRSNVGKS, GKTQL, DVPG, TKAD, and FSS. Mg(2+)-binding residues include Ser39 and Thr61.

This sequence belongs to the TRAFAC class TrmE-Era-EngA-EngB-Septin-like GTPase superfamily. EngB GTPase family. The cofactor is Mg(2+).

Necessary for normal cell division and for the maintenance of normal septation. In Streptococcus sanguinis (strain SK36), this protein is Probable GTP-binding protein EngB.